The primary structure comprises 453 residues: Cholecystokinin receptor (453 aa).

The Extracellular portion of the chain corresponds to 1–64 (MESLRSLSNI…ILDRKKPSPS (64 aa)). Residues N9, N22, N30, N35, and N39 are each glycosylated (N-linked (GlcNAc...) asparagine). A helical transmembrane segment spans residues 65–94 (DLNLWVRIVMYSVIFLLSVFGNTLIIIVLV). Residues 95–104 (MNKRLRTITN) lie on the Cytoplasmic side of the membrane. The chain crosses the membrane as a helical span at residues 105-131 (SFLLSLALSDLMVAVLCMPFTLIPNLM). The Extracellular portion of the chain corresponds to 132 to 142 (ENFIFGEVICR). C141 and C223 are joined by a disulfide. Residues 143 to 164 (AAAYFMGLSVSVSTFNLVAISI) traverse the membrane as a helical segment. At 165-184 (ERYSAICNPLKSRVWQTRSH) the chain is on the cytoplasmic side. A helical membrane pass occupies residues 185–205 (AYRVIAATWVLSSIIMIPYLV). Residues 206–237 (YNKTVTFPMKDRRVGHQCRLVWPSKQVQQAWY) are Extracellular-facing. A helical transmembrane segment spans residues 238–261 (VLLLTILFFIPGVVMIVAYGLISR). Residues 262-343 (ELYRGIQFEM…KLMAKKRVIR (82 aa)) are Cytoplasmic-facing. Residues 344–364 (MLIVIVAMFFICWMPIFVANT) traverse the membrane as a helical segment. The Extracellular portion of the chain corresponds to 365 to 379 (WKAFDELSAFNTLTG). Residues 380 to 403 (APISFIHLLSYTSACVNPLIYCFM) traverse the membrane as a helical segment. C401 is lipidated: S-palmitoyl cysteine. Residues 404-453 (NKRFRKAFLGTFSSCIKPCRNFRDTDEDIAATGASLSKFSYTTVSSLGPA) lie on the Cytoplasmic side of the membrane.

The protein belongs to the G-protein coupled receptor 1 family. Brain and stomach.

It localises to the cell membrane. Its function is as follows. Receptor for cholecystokinin. This receptor mediates its action by association with G proteins that activate a phosphatidylinositol-calcium second messenger system. Has high affinity for CCK-8 and low affinities for gastrin-17-I, CCK-4, and unsulfated CCK-8. The sequence is that of Cholecystokinin receptor (cckar) from Xenopus laevis (African clawed frog).